The following is a 408-amino-acid chain: Argininosuccinate synthase (408 aa).

ATP is bound by residues 14-22 and Ala-41; that span reads AYSGGLDTS. L-citrulline is bound by residues Tyr-92 and Ser-97. Residue Gly-122 participates in ATP binding. Residues Thr-124, Asn-128, and Asp-129 each contribute to the L-aspartate site. Asn-128 contacts L-citrulline. The L-citrulline site is built by Arg-132, Ser-181, Ser-190, Glu-266, and Tyr-278.

It belongs to the argininosuccinate synthase family. Type 1 subfamily. Homotetramer.

It localises to the cytoplasm. The catalysed reaction is L-citrulline + L-aspartate + ATP = 2-(N(omega)-L-arginino)succinate + AMP + diphosphate + H(+). It functions in the pathway amino-acid biosynthesis; L-arginine biosynthesis; L-arginine from L-ornithine and carbamoyl phosphate: step 2/3. The sequence is that of Argininosuccinate synthase from Pelobacter propionicus (strain DSM 2379 / NBRC 103807 / OttBd1).